We begin with the raw amino-acid sequence, 569 residues long: Sulfite reductase [NADPH] hemoprotein beta-component (569 aa).

Cysteine 433, cysteine 439, cysteine 478, and cysteine 482 together coordinate [4Fe-4S] cluster. Cysteine 482 lines the siroheme pocket.

This sequence belongs to the nitrite and sulfite reductase 4Fe-4S domain family. In terms of assembly, alpha(8)-beta(8). The alpha component is a flavoprotein, the beta component is a hemoprotein. It depends on siroheme as a cofactor. Requires [4Fe-4S] cluster as cofactor.

The enzyme catalyses hydrogen sulfide + 3 NADP(+) + 3 H2O = sulfite + 3 NADPH + 4 H(+). The protein operates within sulfur metabolism; hydrogen sulfide biosynthesis; hydrogen sulfide from sulfite (NADPH route): step 1/1. In terms of biological role, component of the sulfite reductase complex that catalyzes the 6-electron reduction of sulfite to sulfide. This is one of several activities required for the biosynthesis of L-cysteine from sulfate. The chain is Sulfite reductase [NADPH] hemoprotein beta-component from Blochmanniella floridana.